A 208-amino-acid chain; its full sequence is Large ribosomal subunit protein bL9 (208 aa).

Residues 168–208 (GKVEKGSCTEGESLELGSVDNDINSGNVDSNESEKQDSVSE) form a disordered region. Over residues 188–197 (NDINSGNVDS) the composition is skewed to polar residues. Over residues 199 to 208 (ESEKQDSVSE) the composition is skewed to basic and acidic residues.

It belongs to the bacterial ribosomal protein bL9 family.

In terms of biological role, binds to the 23S rRNA. This is Large ribosomal subunit protein bL9 from Ehrlichia chaffeensis (strain ATCC CRL-10679 / Arkansas).